The primary structure comprises 188 residues: ATP synthase subunit b (188 aa).

The chain crosses the membrane as a helical span at residues 24 to 44; the sequence is LPASYDIVWSLVVFIIVLILF.

It belongs to the ATPase B chain family. As to quaternary structure, F-type ATPases have 2 components, F(1) - the catalytic core - and F(0) - the membrane proton channel. F(1) has five subunits: alpha(3), beta(3), gamma(1), delta(1), epsilon(1). F(0) has three main subunits: a(1), b(2) and c(10-14). The alpha and beta chains form an alternating ring which encloses part of the gamma chain. F(1) is attached to F(0) by a central stalk formed by the gamma and epsilon chains, while a peripheral stalk is formed by the delta and b chains.

Its subcellular location is the cell membrane. Functionally, f(1)F(0) ATP synthase produces ATP from ADP in the presence of a proton or sodium gradient. F-type ATPases consist of two structural domains, F(1) containing the extramembraneous catalytic core and F(0) containing the membrane proton channel, linked together by a central stalk and a peripheral stalk. During catalysis, ATP synthesis in the catalytic domain of F(1) is coupled via a rotary mechanism of the central stalk subunits to proton translocation. Its function is as follows. Component of the F(0) channel, it forms part of the peripheral stalk, linking F(1) to F(0). The chain is ATP synthase subunit b from Corynebacterium diphtheriae (strain ATCC 700971 / NCTC 13129 / Biotype gravis).